The following is a 211-amino-acid chain: Urease accessory protein UreG (211 aa).

11–18 is a GTP binding site; that stretch reads GPVGAGKT.

Belongs to the SIMIBI class G3E GTPase family. UreG subfamily. In terms of assembly, homodimer. UreD, UreF and UreG form a complex that acts as a GTP-hydrolysis-dependent molecular chaperone, activating the urease apoprotein by helping to assemble the nickel containing metallocenter of UreC. The UreE protein probably delivers the nickel.

Its subcellular location is the cytoplasm. Functionally, facilitates the functional incorporation of the urease nickel metallocenter. This process requires GTP hydrolysis, probably effectuated by UreG. The protein is Urease accessory protein UreG of Actinobacillus pleuropneumoniae (Haemophilus pleuropneumoniae).